The primary structure comprises 697 residues: Alpha-1,4-glucan:maltose-1-phosphate maltosyltransferase (697 aa).

Lys-284 is a binding site for alpha-maltose 1-phosphate. The interval 286 to 305 (RNNSVTAAPGDVGSPWAIGS) is disordered. The alpha-maltose 1-phosphate site is built by Gln-344 and Asp-379. Asp-414 acts as the Nucleophile in catalysis. An alpha-maltose 1-phosphate-binding site is contributed by Asn-415. Glu-443 functions as the Proton donor in the catalytic mechanism. Position 553–554 (553–554 (KY)) interacts with alpha-maltose 1-phosphate.

It belongs to the glycosyl hydrolase 13 family. GlgE subfamily. In terms of assembly, homodimer.

It carries out the reaction alpha-maltose 1-phosphate + [(1-&gt;4)-alpha-D-glucosyl](n) = [(1-&gt;4)-alpha-D-glucosyl](n+2) + phosphate. It functions in the pathway glycan biosynthesis; glycogen biosynthesis. The transfer reaction from maltose-1-P to glycogen is inhibited by micromolar amounts of inorganic phosphate or arsenate but is only slightly inhibited by millimolar concentrations of glucose-1-P, glucose-6-P, or inorganic pyrophosphate. Is also inhibited by ATP, by 1,4-dideoxy-1,4-imino-D-arabinitol (DIA), but not by isofagomine. Maltosyltransferase that uses maltose 1-phosphate (M1P) as the sugar donor to elongate linear or branched alpha-(1-&gt;4)-glucans. Is also able to catalyze the reverse reaction in vitro. Cannot use glucose 1-phosphate as substrate. Is involved in a branched alpha-glucan biosynthetic pathway from trehalose, together with TreS, Mak and GlgB. This is Alpha-1,4-glucan:maltose-1-phosphate maltosyltransferase (glgE) from Mycolicibacterium smegmatis (strain ATCC 700084 / mc(2)155) (Mycobacterium smegmatis).